The chain runs to 104 residues: Large ribosomal subunit protein bL21 (104 aa).

It belongs to the bacterial ribosomal protein bL21 family. As to quaternary structure, part of the 50S ribosomal subunit. Contacts protein L20.

This protein binds to 23S rRNA in the presence of protein L20. The chain is Large ribosomal subunit protein bL21 from Clostridium botulinum (strain Kyoto / Type A2).